Reading from the N-terminus, the 167-residue chain is Lipoprotein signal peptidase (167 aa).

The next 3 membrane-spanning stretches (helical) occupy residues 10 to 30 (LIWL…KAWV), 68 to 88 (WQMW…TFWL), and 98 to 118 (SALP…DRFL). Residues aspartate 124 and aspartate 142 contribute to the active site. The helical transmembrane segment at 138-158 (FNLADSAIVAGAIGIGLLSLF) threads the bilayer.

The protein belongs to the peptidase A8 family.

It is found in the cell inner membrane. The catalysed reaction is Release of signal peptides from bacterial membrane prolipoproteins. Hydrolyzes -Xaa-Yaa-Zaa-|-(S,diacylglyceryl)Cys-, in which Xaa is hydrophobic (preferably Leu), and Yaa (Ala or Ser) and Zaa (Gly or Ala) have small, neutral side chains.. The protein operates within protein modification; lipoprotein biosynthesis (signal peptide cleavage). This protein specifically catalyzes the removal of signal peptides from prolipoproteins. The protein is Lipoprotein signal peptidase of Xylella fastidiosa (strain 9a5c).